We begin with the raw amino-acid sequence, 160 residues long: 2-C-methyl-D-erythritol 2,4-cyclodiphosphate synthase (160 aa).

2 residues coordinate a divalent metal cation: Asp11 and His13. Residues 11–13 (DIH) and 37–38 (HS) each bind 4-CDP-2-C-methyl-D-erythritol 2-phosphate. Position 45 (His45) interacts with a divalent metal cation. 4-CDP-2-C-methyl-D-erythritol 2-phosphate contacts are provided by residues 59–61 (DIG), 135–138 (TTNE), and Arg145.

This sequence belongs to the IspF family. Homotrimer. It depends on a divalent metal cation as a cofactor.

The enzyme catalyses 4-CDP-2-C-methyl-D-erythritol 2-phosphate = 2-C-methyl-D-erythritol 2,4-cyclic diphosphate + CMP. It participates in isoprenoid biosynthesis; isopentenyl diphosphate biosynthesis via DXP pathway; isopentenyl diphosphate from 1-deoxy-D-xylulose 5-phosphate: step 4/6. Its function is as follows. Involved in the biosynthesis of isopentenyl diphosphate (IPP) and dimethylallyl diphosphate (DMAPP), two major building blocks of isoprenoid compounds. Catalyzes the conversion of 4-diphosphocytidyl-2-C-methyl-D-erythritol 2-phosphate (CDP-ME2P) to 2-C-methyl-D-erythritol 2,4-cyclodiphosphate (ME-CPP) with a corresponding release of cytidine 5-monophosphate (CMP). The sequence is that of 2-C-methyl-D-erythritol 2,4-cyclodiphosphate synthase from Nostoc punctiforme (strain ATCC 29133 / PCC 73102).